We begin with the raw amino-acid sequence, 124 residues long: V-type proton ATPase subunit F (124 aa).

This sequence belongs to the V-ATPase F subunit family. As to quaternary structure, V-ATPase is a heteromultimeric enzyme composed of a peripheral catalytic V1 complex (components A to H) attached to an integral membrane V0 proton pore complex (components: a, c, c', c'', d, e, f and VOA1).

The protein localises to the vacuole membrane. Functionally, subunit of the V1 complex of vacuolar(H+)-ATPase (V-ATPase), a multisubunit enzyme composed of a peripheral complex (V1) that hydrolyzes ATP and a membrane integral complex (V0) that translocates protons. V-ATPase is responsible for acidifying and maintaining the pH of intracellular compartments. This is V-type proton ATPase subunit F (vma-7) from Neurospora crassa (strain ATCC 24698 / 74-OR23-1A / CBS 708.71 / DSM 1257 / FGSC 987).